Reading from the N-terminus, the 475-residue chain is Argininosuccinate lyase (475 aa).

It belongs to the lyase 1 family. Argininosuccinate lyase subfamily.

It is found in the cytoplasm. The catalysed reaction is 2-(N(omega)-L-arginino)succinate = fumarate + L-arginine. It functions in the pathway amino-acid biosynthesis; L-arginine biosynthesis; L-arginine from L-ornithine and carbamoyl phosphate: step 3/3. This chain is Argininosuccinate lyase, found in Streptomyces griseus subsp. griseus (strain JCM 4626 / CBS 651.72 / NBRC 13350 / KCC S-0626 / ISP 5235).